A 938-amino-acid chain; its full sequence is Ankyrin repeat and LEM domain-containing protein 2 (938 aa).

At Met-1–Ala-12 the chain is on the lumenal side. A helical; Signal-anchor for type III membrane protein transmembrane segment spans residues Ala-13 to Val-32. Residues Arg-33–Leu-938 are Cytoplasmic-facing. In terms of domain architecture, LEM spans Leu-69–Gln-113. A phosphoserine mark is found at Ser-259 and Ser-268. The stretch at Gly-411–Asn-440 is one ANK repeat. A phosphoserine mark is found at Ser-488, Ser-496, Ser-512, and Ser-528. A compositionally biased stretch (basic and acidic residues) spans Gly-609 to Ala-627. The disordered stretch occupies residues Gly-609–Ser-636. Residues Ser-662, Ser-804, Ser-896, and Ser-914 each carry the phosphoserine modification. The segment at Arg-870–Ser-924 is disordered.

Belongs to the ANKLE2 family. Interacts with BAF/BANF1. Interacts with protein phosphatase 2A (PP2A) components PPP2C (PPP2CA or PPP2CB) and PPP2R1A. In terms of assembly, (Microbial infection) May interact with non-structural protein 4A/NS4A from Zika virus strains Mr-766 or French Polynesia 10087PF/2013; the interaction may inhibit ANKLE2 function and contribute to defects in brain development, such as microcephaly.

The protein localises to the endoplasmic reticulum membrane. Its function is as follows. Involved in mitotic nuclear envelope reassembly by promoting dephosphorylation of BAF/BANF1 during mitotic exit. Coordinates the control of BAF/BANF1 dephosphorylation by inhibiting VRK1 kinase and promoting dephosphorylation of BAF/BANF1 by protein phosphatase 2A (PP2A), thereby facilitating nuclear envelope assembly. May regulate nuclear localization of VRK1 in non-dividing cells. It is unclear whether it acts as a real PP2A regulatory subunit or whether it is involved in recruitment of the PP2A complex. Involved in brain development. The protein is Ankyrin repeat and LEM domain-containing protein 2 (ANKLE2) of Homo sapiens (Human).